Consider the following 1404-residue polypeptide: DNA-directed RNA polymerase subunit beta' (1404 aa).

The Zn(2+) site is built by cysteine 60, cysteine 62, cysteine 75, and cysteine 78. Mg(2+)-binding residues include aspartate 449, aspartate 451, and aspartate 453. Zn(2+) contacts are provided by cysteine 778, cysteine 852, cysteine 859, and cysteine 862. A disordered region spans residues 1381–1404 (DRPLEEEEEEEIPQSIADDSDGDE). Over residues 1384–1404 (LEEEEEEEIPQSIADDSDGDE) the composition is skewed to acidic residues.

The protein belongs to the RNA polymerase beta' chain family. The RNAP catalytic core consists of 2 alpha, 1 beta, 1 beta' and 1 omega subunit. When a sigma factor is associated with the core the holoenzyme is formed, which can initiate transcription. Mg(2+) is required as a cofactor. The cofactor is Zn(2+).

The catalysed reaction is RNA(n) + a ribonucleoside 5'-triphosphate = RNA(n+1) + diphosphate. In terms of biological role, DNA-dependent RNA polymerase catalyzes the transcription of DNA into RNA using the four ribonucleoside triphosphates as substrates. The sequence is that of DNA-directed RNA polymerase subunit beta' from Leptospira borgpetersenii serovar Hardjo-bovis (strain JB197).